We begin with the raw amino-acid sequence, 459 residues long: Smoothelin-like protein 1 (459 aa).

Residues 1 to 27 (MEQTEGNSSEDGTTVSPTAGNLETPGS) show a composition bias toward polar residues. The disordered stretch occupies residues 1-314 (MEQTEGNSSE…RPRGPRAQNR (314 aa)). 5 stretches are compositionally biased toward basic and acidic residues: residues 42–55 (SDKE…EHLC), 75–105 (DELK…KEDT), 112–168 (DTGK…KEDA), 185–211 (ADVK…KELV), and 221–232 (EQGKENESEERA). Positions 124-154 (NEVREKEEAMLASEKQKVDEKETNLESKEKS) form a coiled coil. Residues 260–283 (PESTGETSPSASESSPSEVPGSPT) show a composition bias toward low complexity. Residues 287 to 300 (PSEKKKDRAPERRV) show a composition bias toward basic and acidic residues. Serine 301 carries the post-translational modification Phosphoserine; by PKA and PKG. In terms of domain architecture, Calponin-homology (CH) spans 343–449 (GGVKNMLLEW…YIQELYRSLV (107 aa)). Positions 441 to 459 (IQELYRSLVQKGLVKTKKK) are calmodulin-binding.

Belongs to the smoothelin family. In terms of assembly, interacts with PPP1R12A. Post-translationally, maximal phosphorylation of Ser-301 correlates with maximal relaxation of aorta in response to acetylcholine. Widely expressed, with highest expression in skeletal muscles (at protein level). Within striated muscles, significantly more expressed in soleus muscle compared with plantaris muscle or white vastus (at protein level). 30-40% lower expression in females than in males (at protein level). Expressed in type 2a fibers, but not detected in fast twitch type 2b muscle white vastus nor in oxidative type I/b heart muscle (at protein level). Expressed within myometrial cells of the uterus, as well as in the endometrial layer. In the aorta, confined to smooth muscle cells. Not detected in endothelial cells.

It localises to the cytoplasm. Its subcellular location is the myofibril. The protein localises to the sarcomere. It is found in the i band. The protein resides in the m line. It localises to the nucleus. Its function is as follows. Plays a role in the regulation of contractile properties of both striated and smooth muscles. When unphosphorylated, may inhibit myosin dephosphorylation. Phosphorylation at Ser-301 reduces this inhibitory activity. The chain is Smoothelin-like protein 1 (Smtnl1) from Mus musculus (Mouse).